Consider the following 332-residue polypeptide: Glycerol-3-phosphate dehydrogenase [NAD(P)+] (332 aa).

NADPH contacts are provided by serine 11, phenylalanine 12, lysine 32, and lysine 106. Lysine 106, glycine 137, and serine 139 together coordinate sn-glycerol 3-phosphate. Alanine 141 contacts NADPH. Sn-glycerol 3-phosphate contacts are provided by lysine 192, aspartate 245, serine 255, arginine 256, and asparagine 257. Lysine 192 functions as the Proton acceptor in the catalytic mechanism. Arginine 256 contacts NADPH. Residues valine 280 and glutamate 282 each coordinate NADPH.

This sequence belongs to the NAD-dependent glycerol-3-phosphate dehydrogenase family.

Its subcellular location is the cytoplasm. The catalysed reaction is sn-glycerol 3-phosphate + NAD(+) = dihydroxyacetone phosphate + NADH + H(+). It catalyses the reaction sn-glycerol 3-phosphate + NADP(+) = dihydroxyacetone phosphate + NADPH + H(+). It functions in the pathway membrane lipid metabolism; glycerophospholipid metabolism. Catalyzes the reduction of the glycolytic intermediate dihydroxyacetone phosphate (DHAP) to sn-glycerol 3-phosphate (G3P), the key precursor for phospholipid synthesis. This is Glycerol-3-phosphate dehydrogenase [NAD(P)+] from Staphylococcus haemolyticus (strain JCSC1435).